A 453-amino-acid chain; its full sequence is MSQSPKVGFVSLGCPKALVDSEQIITQLRAEGYEISGSYDGADLVVVNTCGFIDEAVQESLDAIGEALTENGKVIVTGCLGAKSSASGSNLIEEVHPKVLAVTGPHAVGEVMQAVHSHLPKPHDPFVDLVPAAGIKLTPRHYAYLKISEGCNHRCTFCIIPSMRGDLVSRPVAEVMLEAENLFKSGVKELLVISQDTSAYGVDVKYRTGFWNGKPIKTRMTDLVAALGELAAQYGAWVRLHYVYPYPSVDEVIPLMAEGAFKGHVLPYLDVPFQHAHPEVLKRMKRPANAEKVLERVQKWREICPDLTIRSTFIAGFPGETEEQFETLLDFIREAELDRVGCFAYSPVEGATANDLDGALPDEVREERRARFMEVAEEVSANRMQRKVGKTLKVLIDEVSAEGGIGRTAADAPEIDGVVYVEPAAKASKRYKVGDFVSVKITGADGHDLWGEV.

Positions 5 to 120 (PKVGFVSLGC…VMQAVHSHLP (116 aa)) constitute an MTTase N-terminal domain. The [4Fe-4S] cluster site is built by cysteine 14, cysteine 50, cysteine 79, cysteine 151, cysteine 155, and cysteine 158. In terms of domain architecture, Radical SAM core spans 137–382 (LTPRHYAYLK…MEVAEEVSAN (246 aa)). Positions 385 to 453 (QRKVGKTLKV…ADGHDLWGEV (69 aa)) constitute a TRAM domain.

This sequence belongs to the methylthiotransferase family. RimO subfamily. [4Fe-4S] cluster serves as cofactor.

It localises to the cytoplasm. The catalysed reaction is L-aspartate(89)-[ribosomal protein uS12]-hydrogen + (sulfur carrier)-SH + AH2 + 2 S-adenosyl-L-methionine = 3-methylsulfanyl-L-aspartate(89)-[ribosomal protein uS12]-hydrogen + (sulfur carrier)-H + 5'-deoxyadenosine + L-methionine + A + S-adenosyl-L-homocysteine + 2 H(+). Its function is as follows. Catalyzes the methylthiolation of an aspartic acid residue of ribosomal protein uS12. This chain is Ribosomal protein uS12 methylthiotransferase RimO, found in Burkholderia cenocepacia (strain HI2424).